Here is an 816-residue protein sequence, read N- to C-terminus: Oxysterol-binding protein-related protein 1D (816 aa).

Residues 92–229 (GAGVAGIMYK…WVEAFQVAKD (138 aa)) form the PH domain. The stretch at 290–321 (KHIILLDTLRQLETEKIELEATVVDETKEHDS) forms a coiled coil. A disordered region spans residues 340-362 (SASDSEADNESQDGADVESDEDD). A compositionally biased stretch (acidic residues) spans 344 to 362 (SEADNESQDGADVESDEDD). Residues 735-764 (NGEYESANAEKLRLEQLQRQARRLQEKGWK) are a coiled coil.

The protein belongs to the OSBP family. As to expression, expressed in roots, leaves, stems and flowers.

May be involved in the transport of sterols. The chain is Oxysterol-binding protein-related protein 1D (ORP1D) from Arabidopsis thaliana (Mouse-ear cress).